The sequence spans 353 residues: Photosystem II protein D1 (353 aa).

Thr-2 is modified (N-acetylthreonine). Thr-2 is subject to Phosphothreonine. Helical transmembrane passes span 29–46 (YIGWFGVLMIPTLLTATS), 118–133 (HFLLGVACYMGREWEL), and 142–156 (WIAVAYSAPVAAATA). His-118 contributes to the chlorophyll a binding site. Position 126 (Tyr-126) interacts with pheophytin a. [CaMn4O5] cluster is bound by residues Asp-170 and Glu-189. Residues 197–218 (FHMLGVAGVFGGSLFSAMHGSL) traverse the membrane as a helical segment. Residue His-198 coordinates chlorophyll a. A quinone is bound by residues His-215 and 264–265 (SF). His-215 is a binding site for Fe cation. His-272 contacts Fe cation. A helical membrane pass occupies residues 274–288 (FLAAWPVVGIWFTAL). Residues His-332, Glu-333, Asp-342, and Ala-344 each coordinate [CaMn4O5] cluster. The propeptide occupies 345 to 353 (SVELDSIDG).

Belongs to the reaction center PufL/M/PsbA/D family. In terms of assembly, PSII is composed of 1 copy each of membrane proteins PsbA, PsbB, PsbC, PsbD, PsbE, PsbF, PsbH, PsbI, PsbJ, PsbK, PsbL, PsbM, PsbT, PsbX, PsbY, PsbZ, Psb30/Ycf12, at least 3 peripheral proteins of the oxygen-evolving complex and a large number of cofactors. It forms dimeric complexes. It depends on The D1/D2 heterodimer binds P680, chlorophylls that are the primary electron donor of PSII, and subsequent electron acceptors. It shares a non-heme iron and each subunit binds pheophytin, quinone, additional chlorophylls, carotenoids and lipids. D1 provides most of the ligands for the Mn4-Ca-O5 cluster of the oxygen-evolving complex (OEC). There is also a Cl(-1) ion associated with D1 and D2, which is required for oxygen evolution. The PSII complex binds additional chlorophylls, carotenoids and specific lipids. as a cofactor. In terms of processing, tyr-161 forms a radical intermediate that is referred to as redox-active TyrZ, YZ or Y-Z. Post-translationally, C-terminally processed by CTPA; processing is essential to allow assembly of the oxygen-evolving complex and thus photosynthetic growth.

The protein localises to the plastid. The protein resides in the chloroplast thylakoid membrane. It carries out the reaction 2 a plastoquinone + 4 hnu + 2 H2O = 2 a plastoquinol + O2. Its function is as follows. Photosystem II (PSII) is a light-driven water:plastoquinone oxidoreductase that uses light energy to abstract electrons from H(2)O, generating O(2) and a proton gradient subsequently used for ATP formation. It consists of a core antenna complex that captures photons, and an electron transfer chain that converts photonic excitation into a charge separation. The D1/D2 (PsbA/PsbD) reaction center heterodimer binds P680, the primary electron donor of PSII as well as several subsequent electron acceptors. The polypeptide is Photosystem II protein D1 (Gnetum parvifolium (Small-leaved jointfir)).